Here is a 230-residue protein sequence, read N- to C-terminus: Tol-Pal system protein TolQ (230 aa).

The next 3 membrane-spanning stretches (helical) occupy residues 16 to 36, 139 to 159, and 171 to 191; these read LVKL…AIII, YIGL…LGAV, and IAEA…AVMA.

The protein belongs to the ExbB/TolQ family. The Tol-Pal system is composed of five core proteins: the inner membrane proteins TolA, TolQ and TolR, the periplasmic protein TolB and the outer membrane protein Pal. They form a network linking the inner and outer membranes and the peptidoglycan layer.

It localises to the cell inner membrane. Part of the Tol-Pal system, which plays a role in outer membrane invagination during cell division and is important for maintaining outer membrane integrity. Required, with TolR, for the proton motive force-dependent activation of TolA and for TolA-Pal interaction. This chain is Tol-Pal system protein TolQ, found in Escherichia coli O157:H7.